The following is a 194-amino-acid chain: UPF0301 protein FTA_1286 (194 aa).

Belongs to the UPF0301 (AlgH) family.

This is UPF0301 protein FTA_1286 from Francisella tularensis subsp. holarctica (strain FTNF002-00 / FTA).